Here is a 639-residue protein sequence, read N- to C-terminus: UvrABC system protein C (639 aa).

The GIY-YIG domain occupies 20 to 97 (ERSGVYRMFD…IKKFQPKFNI (78 aa)). Residues 207-242 (KELQENLSRKMEELSSQMRFEEAAEIRDRIKALSYV) enclose the UVR domain.

Belongs to the UvrC family. In terms of assembly, interacts with UvrB in an incision complex.

It is found in the cytoplasm. In terms of biological role, the UvrABC repair system catalyzes the recognition and processing of DNA lesions. UvrC both incises the 5' and 3' sides of the lesion. The N-terminal half is responsible for the 3' incision and the C-terminal half is responsible for the 5' incision. The polypeptide is UvrABC system protein C (Rickettsia conorii (strain ATCC VR-613 / Malish 7)).